Here is a 1512-residue protein sequence, read N- to C-terminus: MSPLLPTHWGASAPQNEPTLPSPSHSVSTRVGDEEKLRRSEGSDGEDRINLDSNKYDVKGMKETEDGGANKQVMVVFEQKSGKELEKPIEEGPFTQPRWRHSLPFVKPKHPPPPPPLSLDDAPVTPEVSANFFNLLFFNWISPMMALGSARPLQDADLWRMDAARGAKPLSEKLLASYAARTKKANEYNARLADPNTPLPFSRRILYSVLPHREQREKDYRKKHGKKHASLAMSLLDVFGWFFMSAGFIKVFGDTCQAVTPLVIRRLINWSANYQAAKSAGLDLPSRGPGIGAAIGLLLLLICSSLGMHHYFIRSMGTGVLSRAAIISAVYQQALQFTQKSRGQIPNGKLVNHISTDTSRIDFAAGFSHMLWTAPVQMIVIIIILIVQIGYSALPGIAFLLVMTPLQARFMKTLFMFRKKAATWTDKRAKLLQEILGGMRIVKYMAWEKPFLERIHAIRSMELKYIRLLLIFRSGMTAIAMSLPILAAILSFITYSLTSHSLEAAKIFTVITLFNLMRMPLMMWPMTLSSTADALNALGRLEAVFDAELVKEEKKVDPSMDVAIRLENASFTWDSAPIEEDNMMSKLTGKYAKVLNGGKPGGPPGKKEKKNKPKKVTAAEEIQAETAAGQPGAGEASAEGQGQKNPSAPGIDEEISEKKEVEIFQLRDINLNIPKGSLTAIVGAIGSGKSSLLQGLMGEMRRTTGSVTFSGSTSLCAQTPWIQNATVRENILFGQPWDEERYWAAIRDSSLEADLELLEDGDGTEIGEKGINLSGGQKQRVNIARAIYYNADIIALDDPLSALDAGVGKAIFFNAIINALSGKTRVLVTHALHLLPYVDNIIMMEDGKIGEVGTYRELKERNGAFAKLIKEFGNEELAEEKMETEEEAVESSGPTVTHDRANMMSKGSAHTLMQTEERNVGALKKGTFFDYLKAGKGVFMLPLLFFCIVVAQSFYVITSFWLVWWEETKWPQPNGFYMGIYAGLGVGLAIALFFQGFSNALINYFASVNIHHNAISRVMLAPQTFFDTTPLGRIMNRFSKDTDTIDNTLSDAMRMAISTLANIVGSVILLAIIEPYFLIAMAVVSLLYLHNAMFYRRSSREFKRIDSILRSSLYSHFSESLSGVATIRSYGETARFFEDNIHRVDIENRAYYLTIVNQRWLGLRLDFLGSLLSFSVAIIVVCSSSVSASNGGLGLSTIVSVQQAFSWLVRQIAEVENDMVGAERIMHYANELEQESPHQIEGTKPPASWPSEGTIEFKDVRMRYRPELPDVLKGLTLNVGASEKIGVVGRTGAGKSSIMVALFRMSELSHGFIKIDGVDVSKVGLNDLRSGISIIPQDPLLFSGTLRSNIDPFNTKTDAELYDTLRRSHLIGSSDSSHNSDSQNRFNLDTVIEEEGGNLSVGERSLVSLARALVRNTKVLVLDEATASVDLETDAKIQETIRQEFRDRTLLCIAHRLKTILAYDRILVMSDGQVAEFDTPENLFLSGGIFTEMCSKANISLADIKAAAALRF.

A disordered region spans residues 1–68 (MSPLLPTHWG…KGMKETEDGG (68 aa)). Residues 13 to 29 (APQNEPTLPSPSHSVST) are compositionally biased toward polar residues. Basic and acidic residues predominate over residues 31-65 (VGDEEKLRRSEGSDGEDRINLDSNKYDVKGMKETE). Transmembrane regions (helical) follow at residues 229–249 (ASLAMSLLDVFGWFFMSAGFI), 288–308 (GPGIGAAIGLLLLLICSSLGM), 363–385 (FAAGFSHMLWTAPVQMIVIIIIL), 475–495 (GMTAIAMSLPILAAILSFITY), and 507–527 (IFTVITLFNLMRMPLMMWPMT). Residues 246–533 (AGFIKVFGDT…WPMTLSSTAD (288 aa)) form the ABC transmembrane type-1 1 domain. The interval 594-656 (VLNGGKPGGP…SAPGIDEEIS (63 aa)) is disordered. Over residues 619–643 (AEEIQAETAAGQPGAGEASAEGQGQ) the composition is skewed to low complexity. Positions 651–871 (IDEEISEKKE…NGAFAKLIKE (221 aa)) constitute an ABC transporter 1 domain. 683–690 (GAIGSGKS) is an ATP binding site. The next 4 membrane-spanning stretches (helical) occupy residues 937 to 957 (GVFMLPLLFFCIVVAQSFYVI), 974 to 994 (NGFYMGIYAGLGVGLAIALFF), 1067 to 1087 (VILLAIIEPYFLIAMAVVSLL), and 1167 to 1187 (FLGSLLSFSVAIIVVCSSSVS). The ABC transmembrane type-1 2 domain occupies 943–1217 (LLFFCIVVAQ…LVRQIAEVEN (275 aa)). One can recognise an ABC transporter 2 domain in the interval 1255 to 1496 (IEFKDVRMRY…GGIFTEMCSK (242 aa)). Residue 1289-1296 (GRTGAGKS) participates in ATP binding.

This sequence belongs to the ABC transporter superfamily. ABCC family. Conjugate transporter (TC 3.A.1.208) subfamily.

It localises to the extracellular vesicle membrane. It is found in the secreted. Functionally, transmembrane transporter. May play a role in the packaging or formation of extracellular vesicles (EVs), and in the export of virulence factors from EVs. Required for efficient non-lytic exocytosis from host macrophages, the process by which the yeast escapes host macrophages with both host cell and pathogen remaining viable. The polypeptide is ATP-dependent permease YOR1 (Cryptococcus neoformans var. grubii serotype A (strain H99 / ATCC 208821 / CBS 10515 / FGSC 9487) (Filobasidiella neoformans var. grubii)).